The following is a 336-amino-acid chain: tRNA N6-adenosine threonylcarbamoyltransferase (336 aa).

2 residues coordinate Fe cation: histidine 114 and histidine 118. Residues 136-140 (LVSGG), aspartate 169, glycine 182, aspartate 186, and asparagine 275 contribute to the substrate site. Aspartate 301 is a Fe cation binding site.

This sequence belongs to the KAE1 / TsaD family. Fe(2+) is required as a cofactor.

It is found in the cytoplasm. The enzyme catalyses L-threonylcarbamoyladenylate + adenosine(37) in tRNA = N(6)-L-threonylcarbamoyladenosine(37) in tRNA + AMP + H(+). Functionally, required for the formation of a threonylcarbamoyl group on adenosine at position 37 (t(6)A37) in tRNAs that read codons beginning with adenine. Is involved in the transfer of the threonylcarbamoyl moiety of threonylcarbamoyl-AMP (TC-AMP) to the N6 group of A37, together with TsaE and TsaB. TsaD likely plays a direct catalytic role in this reaction. This chain is tRNA N6-adenosine threonylcarbamoyltransferase, found in Streptococcus gordonii (strain Challis / ATCC 35105 / BCRC 15272 / CH1 / DL1 / V288).